Reading from the N-terminus, the 313-residue chain is Hydroxyacylglutathione hydrolase, mitochondrial (313 aa).

6 residues coordinate Zn(2+): His-107, His-109, Asp-111, His-112, His-163, and Asp-187. Substrate-binding positions include 196–198 and 226–228; these read KFF and HEY. His-226 contacts Zn(2+). Composition is skewed to basic and acidic residues over residues 285–294 and 301–313; these read VQEHAGERDP and IRKE…VPKD. The interval 285 to 313 is disordered; that stretch reads VQEHAGERDPISTMGAIRKEKDHFKVPKD. 302 to 305 contacts substrate; the sequence is RKEK.

It belongs to the metallo-beta-lactamase superfamily. Glyoxalase II family. Monomer. Zn(2+) is required as a cofactor.

It is found in the mitochondrion matrix. The protein localises to the cytoplasm. The catalysed reaction is an S-(2-hydroxyacyl)glutathione + H2O = a 2-hydroxy carboxylate + glutathione + H(+). It carries out the reaction (R)-S-lactoylglutathione + H2O = (R)-lactate + glutathione + H(+). Its function is as follows. Thiolesterase that catalyzes the hydrolysis of S-D-lactoyl-glutathione to form glutathione and D-lactic acid. This is Hydroxyacylglutathione hydrolase, mitochondrial (hagh) from Xenopus tropicalis (Western clawed frog).